Consider the following 1257-residue polypeptide: MNGYVDFSPSPTSPTKEPGAPQPTQAVLQEDVDMSSGSSGNENCSTGRDSQGSDCDDNGKELRMLVESSNTHPSPDDAFRLMMTEAEHNPSTSGCSSEQSAKADAHKELIRTLKELKVHLPADKKAKGKASTLATLKYALRSVKQVKANEEYYQLLMSSESQPCSVDVPSYSMEQVEGITSEYIVKNADMFAVAVSLVSGKILYISNQVASIFHCKKDAFSDAKFVEFLAPHDVSVFHSYTTPYKLPPWSVCSGLDSFTQECMEEKSFFCRVSVGKHHENEIRYQPFRMTPYLVKVQEQQGAESQLCCLLLAERVHSGYEAPRIPPEKRIFTTTHTPNCLFQAVDERAVPLLGYLPQDLIETPVLVQLHPSDRPLMLAIHKKILQAGGQPFDYSPIRFRTRNGEYITLDTSWSSFINPWSRKISFIIGRHKVRVGPLNEDVFAAPPCPEEKTPHPSVQELTEQIHRLLMQPVPHSGSSGYGSLGSNGSHEHLMSQTSSSDSNGQEESHRRRSGIFKTSGKIQTKSHVSHESGGQKEASVAEMQSSPPAQVKAVTTIERDSSGASLPKASFPEELAYKNQPPCSYQQISCLDSVIRYLESCSEAATLKRKCEFPANIPSRKATVSPGLHSGEAARPSKVTSHTEVSAHLSSLTLPGKAESVVSLTSQCSYSSTIVHVGDKKPQPELETVEDMASGPESLDGAAGGLSQEKGPLQKLGLTKEVLAAHTQKEEQGFLQRFREVSRLSALQAHCQNYLQERSRAQASDRGLRNTSGLESSWKKTGKNRKLKSKRVKTRDSSESTGSGGPVSHRPPLMGLNATAWSPSDTSQSSCPSAPFPTAVPAYPLPVFQAPGIVSTPGTVVAPPAATHTGFTMPVVPMGTQPEFAVQPLPFAAPLAPVMAFMLPSYPFPPATPNLPQAFLPSQPHFPAHPTLASEITPASQAEFPSRTSTLRQPCACPVTPPAGTVALGRASPPLFQSRGSSPLQLNLLQLEEAPEGSTGAAGTLGTTGTAASGLDCTSGTSRDRQPKAPPTCNEPSDTQNSDAISTSSDLLNLLLGEDLCSATGSALSRSGASATSDSLGSSSLGFGTSQSGAGSSDTSHTSKYFGSIDSSENNHKAKMIPDTEESEQFIKYVLQDPIWLLMANTDDSIMMTYQLPSRDLQAVLKEDQEKLKLLQRSQPRFTEGQRRELREVHPWVHTGGLPTAIDVTGCVYCESEEKGNICLPYEEDSPSPGLCDTSEAKEEEGEQLTGPRIEAQT.

The interval 1–60 (MNGYVDFSPSPTSPTKEPGAPQPTQAVLQEDVDMSSGSSGNENCSTGRDSQGSDCDDNGK) is disordered. The segment covering 35 to 53 (SSGSSGNENCSTGRDSQGS) has biased composition (polar residues). The short motif at 109-118 (LIRTLKELKV) is the Nuclear export signal 1 element. The region spanning 179–246 (ITSEYIVKNA…FHSYTTPYKL (68 aa)) is the PAS 1 domain. The short motif at 306 to 310 (LCCLL) is the LXXLL element. A PAS 2 domain is found at 319–385 (YEAPRIPPEK…MLAIHKKILQ (67 aa)). One can recognise a PAC domain in the interval 393–436 (YSPIRFRTRNGEYITLDTSWSSFINPWSRKISFIIGRHKVRVGP). Positions 460-469 (LTEQIHRLLM) match the Nuclear export signal 2 motif. 2 disordered regions span residues 471 to 565 (PVPH…GASL) and 617 to 638 (PSRK…PSKV). The important for protein stability stretch occupies residues 478 to 482 (SGYGS). The segment covering 493-504 (MSQTSSSDSNGQ) has biased composition (polar residues). The tract at residues 510 to 709 (RRSGIFKTSG…GAAGGLSQEK (200 aa)) is CSNK1E binding domain. S525, S528, S531, S538, and S544 each carry phosphoserine. T554 carries the phosphothreonine modification. 6 positions are modified to phosphoserine: S659, S693, S697, S706, S758, and S763. The disordered stretch occupies residues 757–832 (RSRAQASDRG…SDTSQSSCPS (76 aa)). A Nuclear localization signal motif is present at residues 778 to 794 (KKTGKNRKLKSKRVKTR). The span at 779-792 (KTGKNRKLKSKRVK) shows a compositional bias: basic residues. The span at 821-832 (SPSDTSQSSCPS) shows a compositional bias: low complexity. T858 is modified (phosphothreonine). The interaction with PPARG stretch occupies residues 882-1067 (EFAVQPLPFA…DLCSATGSAL (186 aa)). A Phosphoserine modification is found at S939. T964 carries the post-translational modification Phosphothreonine. Residue S971 is modified to Phosphoserine. Residues 983-990 (LQLNLLQL) carry the Nuclear export signal 3 motif. The disordered stretch occupies residues 994–1044 (PEGSTGAAGTLGTTGTAASGLDCTSGTSRDRQPKAPPTCNEPSDTQNSDAI). Residues 996-1014 (GSTGAAGTLGTTGTAASGL) show a composition bias toward low complexity. The span at 1033–1044 (NEPSDTQNSDAI) shows a compositional bias: polar residues. Residues 1051-1055 (LNLLL) carry the LXXLL motif. Residues 1070 to 1092 (SGASATSDSLGSSSLGFGTSQSG) are compositionally biased toward low complexity. Residues 1070 to 1115 (SGASATSDSLGSSSLGFGTSQSGAGSSDTSHTSKYFGSIDSSENNH) form a disordered region. Residues 1093–1111 (AGSSDTSHTSKYFGSIDSS) are compositionally biased toward polar residues. At S1126 the chain carries Phosphoserine. A CRY binding domain region spans residues 1157–1257 (SRDLQAVLKE…LTGPRIEAQT (101 aa)). Positions 1224–1257 (PYEEDSPSPGLCDTSEAKEEEGEQLTGPRIEAQT) are disordered.

Homodimer. Component of the circadian core oscillator, which includes the CRY proteins, CLOCK or NPAS2, BMAL1 or BMAL2, CSNK1D and/or CSNK1E, TIMELESS, and the PER proteins. Interacts with CLOCK-BMAL1 (off DNA). Interacts with BMAL2. Interacts directly with PER1 and PER3, and through a C-terminal domain, with CRY1 and CRY2. Interacts (via PAS 2 domain) with TIMELESS. Interacts with NFIL3. Different large complexes have been identified with different repressive functions. The core of PER complexes is composed of at least PER1, PER2, PER3, CRY1, CRY2, CSNK1D and/or CSNK1E. The large PER complex involved in the repression of transcriptional termination is composed of at least PER2, CDK9, DDX5, DHX9, NCBP1 and POLR2A (active). The large PER complex involved in the histone deacetylation is composed of at least HDAC1, PER2, SFPQ and SIN3A. The large PER complex involved in the histone methylation is composed of at least PER2, CBX3, TRIM28, SUV39H1 and/or SUV39H2; CBX3 mediates the formation of the complex. Interacts with SETX; the interaction inhibits termination of circadian target genes. Interacts with the nuclear receptors HNF4A, NR1D1, NR4A2, RORA, PPARA, PPARG and THRA; the interaction with at least PPARG is ligand dependent. Interacts with PML. Interacts (phosphorylated) with BTRC and FBXW11; the interactions trigger proteasomal degradation. Interacts with NONO and SFPQ. Interacts with CAVIN3. Interacts with MAGEL2. Interacts with MAP1LC3B. Interacts with HNF4A. In terms of processing, acetylated. Deacetylated by SIRT1, resulting in decreased protein stability. Deacetylated by SIRT6, preventing its degradation by the proteasome, resulting in increased protein stability. Post-translationally, phosphorylated by CSNK1E and CSNK1D. Phosphorylation results in PER2 protein degradation. May be dephosphorylated by PP1. Ubiquitinated, leading to its proteasomal degradation. Ubiquitination may be inhibited by CRY1. In the brain, high expression in SCN during the subjective day. Constitutive expression in the cornu ammonis and in the dentate gyrus of the hippocampus. Also expressed in the piriform cortex and the glomeruli of the olfactory bulb, and at a lower extent in the cerebral cortex. Not expressed in the pars tuberalis and the Purkinje neurons. Also expressed in adipose tissue (white and brown), heart, kidney, bladder, lumbar spinal cord, skeletal muscle, spleen, lung, pancreas and liver with highest levels in skeletal muscle and liver and lowest levels in spleen.

The protein localises to the nucleus. It is found in the cytoplasm. The protein resides in the perinuclear region. Its function is as follows. Transcriptional repressor which forms a core component of the circadian clock. The circadian clock, an internal time-keeping system, regulates various physiological processes through the generation of approximately 24 hour circadian rhythms in gene expression, which are translated into rhythms in metabolism and behavior. It is derived from the Latin roots 'circa' (about) and 'diem' (day) and acts as an important regulator of a wide array of physiological functions including metabolism, sleep, body temperature, blood pressure, endocrine, immune, cardiovascular, and renal function. Consists of two major components: the central clock, residing in the suprachiasmatic nucleus (SCN) of the brain, and the peripheral clocks that are present in nearly every tissue and organ system. Both the central and peripheral clocks can be reset by environmental cues, also known as Zeitgebers (German for 'timegivers'). The predominant Zeitgeber for the central clock is light, which is sensed by retina and signals directly to the SCN. The central clock entrains the peripheral clocks through neuronal and hormonal signals, body temperature and feeding-related cues, aligning all clocks with the external light/dark cycle. Circadian rhythms allow an organism to achieve temporal homeostasis with its environment at the molecular level by regulating gene expression to create a peak of protein expression once every 24 hours to control when a particular physiological process is most active with respect to the solar day. Transcription and translation of core clock components (CLOCK, NPAS2, BMAL1, BMAL2, PER1, PER2, PER3, CRY1 and CRY2) plays a critical role in rhythm generation, whereas delays imposed by post-translational modifications (PTMs) are important for determining the period (tau) of the rhythms (tau refers to the period of a rhythm and is the length, in time, of one complete cycle). A diurnal rhythm is synchronized with the day/night cycle, while the ultradian and infradian rhythms have a period shorter and longer than 24 hours, respectively. Disruptions in the circadian rhythms contribute to the pathology of cardiovascular diseases, cancer, metabolic syndrome and aging. A transcription/translation feedback loop (TTFL) forms the core of the molecular circadian clock mechanism. Transcription factors, CLOCK or NPAS2 and BMAL1 or BMAL2, form the positive limb of the feedback loop, act in the form of a heterodimer and activate the transcription of core clock genes and clock-controlled genes (involved in key metabolic processes), harboring E-box elements (5'-CACGTG-3') within their promoters. The core clock genes: PER1/2/3 and CRY1/2 which are transcriptional repressors form the negative limb of the feedback loop and interact with the CLOCK|NPAS2-BMAL1|BMAL2 heterodimer inhibiting its activity and thereby negatively regulating their own expression. This heterodimer also activates nuclear receptors NR1D1/2 and RORA/B/G, which form a second feedback loop and which activate and repress BMAL1 transcription, respectively. PER1 and PER2 proteins transport CRY1 and CRY2 into the nucleus with appropriate circadian timing, but also contribute directly to repression of clock-controlled target genes through interaction with several classes of RNA-binding proteins, helicases and others transcriptional repressors. PER appears to regulate circadian control of transcription by at least three different modes. First, interacts directly with the CLOCK-BMAL1 at the tail end of the nascent transcript peak to recruit complexes containing the SIN3-HDAC that remodel chromatin to repress transcription. Second, brings H3K9 methyltransferases such as SUV39H1 and SUV39H2 to the E-box elements of the circadian target genes, like PER2 itself or PER1. The recruitment of each repressive modifier to the DNA seems to be very precisely temporally orchestrated by the large PER complex, the deacetylases acting before than the methyltransferases. Additionally, large PER complexes are also recruited to the target genes 3' termination site through interactions with RNA-binding proteins and helicases that may play a role in transcription termination to regulate transcription independently of CLOCK-BMAL1 interactions. Recruitment of large PER complexes to the elongating polymerase at PER and CRY termination sites inhibited SETX action, impeding RNA polymerase II release and thereby repressing transcriptional reinitiation. May propagate clock information to metabolic pathways via the interaction with nuclear receptors. Coactivator of PPARA and corepressor of NR1D1, binds rhythmically at the promoter of nuclear receptors target genes like BMAL1 or G6PC1. Directly and specifically represses PPARG proadipogenic activity by blocking PPARG recruitment to target promoters and thereby transcriptional activation. Required for fatty acid and lipid metabolism, is involved as well in the regulation of circulating insulin levels. Plays an important role in the maintenance of cardiovascular functions through the regulation of NO and vasodilatatory prostaglandins production in aortas. Controls circadian glutamate uptake in synaptic vesicles through the regulation of VGLUT1 expression. May also be involved in the regulation of inflammatory processes. Represses the CLOCK-BMAL1 induced transcription of BHLHE40/DEC1 and ATF4. Negatively regulates the formation of the TIMELESS-CRY1 complex by competing with TIMELESS for binding to CRY1. This is Period circadian protein homolog 2 (Per2) from Mus musculus (Mouse).